Consider the following 347-residue polypeptide: Sensor protein VraS (347 aa).

2 helical membrane-spanning segments follow: residues 13-33 (ILVY…VNII) and 43-63 (IFGI…CIIV). The 192-residue stretch at 150–341 (RLARELHDSV…RIEVKAPLNK (192 aa)) folds into the Histidine kinase domain. Residue histidine 156 is modified to Phosphohistidine.

In terms of processing, autophosphorylated on His-156.

It localises to the cell membrane. It catalyses the reaction ATP + protein L-histidine = ADP + protein N-phospho-L-histidine.. Its function is as follows. Member of the two-component regulatory system PprA/PprB involved in biofilm formation by controlling the expression of many related genes including type IVb pili major subunit flp pilin, adhesin bapA or cupE fimbriae. Also modulates quorum-sensing signal production acting on both negative and positive modulators. Functions as a heme sensor histidine kinase which is autophosphorylated at a histidine residue and transfers its phosphate group to PprB. The sequence is that of Sensor protein VraS (vraS) from Staphylococcus aureus (strain COL).